Consider the following 111-residue polypeptide: Large ribosomal subunit protein uL22 (111 aa).

Belongs to the universal ribosomal protein uL22 family. As to quaternary structure, part of the 50S ribosomal subunit.

In terms of biological role, this protein binds specifically to 23S rRNA; its binding is stimulated by other ribosomal proteins, e.g. L4, L17, and L20. It is important during the early stages of 50S assembly. It makes multiple contacts with different domains of the 23S rRNA in the assembled 50S subunit and ribosome. Its function is as follows. The globular domain of the protein is located near the polypeptide exit tunnel on the outside of the subunit, while an extended beta-hairpin is found that lines the wall of the exit tunnel in the center of the 70S ribosome. This is Large ribosomal subunit protein uL22 from Mycoplasma mycoides subsp. mycoides SC (strain CCUG 32753 / NCTC 10114 / PG1).